The sequence spans 197 residues: Isopentenyl-diphosphate Delta-isomerase (197 aa).

2 residues coordinate Mn(2+): His-41 and His-48. The Nudix hydrolase domain maps to 46-183 (QLHRAFSVFL…AWFMTVLDAA (138 aa)). Residue Cys-83 is part of the active site. Residue His-85 coordinates Mn(2+). Glu-103 lines the Mg(2+) pocket. Glu-130 and Glu-132 together coordinate Mn(2+). The active site involves Glu-132.

This sequence belongs to the IPP isomerase type 1 family. The cofactor is Mg(2+). Requires Mn(2+) as cofactor.

It localises to the cytoplasm. It catalyses the reaction isopentenyl diphosphate = dimethylallyl diphosphate. It participates in isoprenoid biosynthesis; dimethylallyl diphosphate biosynthesis; dimethylallyl diphosphate from isopentenyl diphosphate: step 1/1. In terms of biological role, catalyzes the 1,3-allylic rearrangement of the homoallylic substrate isopentenyl (IPP) to its highly electrophilic allylic isomer, dimethylallyl diphosphate (DMAPP). The protein is Isopentenyl-diphosphate Delta-isomerase of Streptomyces griseus subsp. griseus (strain JCM 4626 / CBS 651.72 / NBRC 13350 / KCC S-0626 / ISP 5235).